Consider the following 284-residue polypeptide: CBY1-interacting BAR domain-containing protein 1-A (284 aa).

The transit peptide at 1-48 (MSQTPEARARDNQTRQIQESVNNVEKHFGELCQIFAGYVRKTARLRDK) directs the protein to the mitochondrion. Residues 11–221 (DNQTRQIQES…DIDEEEDLEV (211 aa)) are BAR-like. Coiled-coil stretches lie at residues 142 to 184 (RQII…IKKL) and 260 to 284 (NRQKNRIEDEDEEEEDDENSTEDEN). Polar residues predominate over residues 242–261 (SRTGSTSRGPSVISQPPGNR). Residues 242–284 (SRTGSTSRGPSVISQPPGNRQKNRIEDEDEEEEDDENSTEDEN) are disordered. The span at 267–284 (EDEDEEEEDDENSTEDEN) shows a compositional bias: acidic residues.

This sequence belongs to the CIBAR family.

The protein localises to the cytoplasm. It is found in the cytoskeleton. It localises to the microtubule organizing center. Its subcellular location is the centrosome. The protein resides in the centriole. The protein localises to the nucleus. It is found in the mitochondrion inner membrane. It localises to the cell projection. Its subcellular location is the cilium. The protein resides in the flagellum. Its function is as follows. Plays a critical role in regulating mitochondrial ultrastructure and function by maintaining the integrity of mitochondrial morphology, particularly the organization of cristae. Plays a crucial role in ciliogenesis. Plays a key role in the correct positioning of the annulus, a septin-based ring structure in the sperm flagellum, serving both as a physical barrier and a membrane diffusion barrier that separates the midpiece (MP) from the principal piece (PP). This chain is CBY1-interacting BAR domain-containing protein 1-A, found in Xenopus laevis (African clawed frog).